The chain runs to 152 residues: Large ribosomal subunit protein bL9 (152 aa).

The protein belongs to the bacterial ribosomal protein bL9 family.

In terms of biological role, binds to the 23S rRNA. The chain is Large ribosomal subunit protein bL9 from Microcystis aeruginosa (strain NIES-843 / IAM M-2473).